A 160-amino-acid chain; its full sequence is Transcription antitermination protein NusB (160 aa).

The protein belongs to the NusB family.

Functionally, involved in transcription antitermination. Required for transcription of ribosomal RNA (rRNA) genes. Binds specifically to the boxA antiterminator sequence of the ribosomal RNA (rrn) operons. The chain is Transcription antitermination protein NusB from Nitrobacter hamburgensis (strain DSM 10229 / NCIMB 13809 / X14).